The primary structure comprises 194 residues: RNA polymerase II subunit A C-terminal domain phosphatase SSU72 like protein 5 (194 aa).

It belongs to the SSU72 phosphatase family.

The protein localises to the nucleus. The enzyme catalyses O-phospho-L-seryl-[protein] + H2O = L-seryl-[protein] + phosphate. It carries out the reaction O-phospho-L-threonyl-[protein] + H2O = L-threonyl-[protein] + phosphate. Its function is as follows. Protein phosphatase that catalyzes the dephosphorylation of the C-terminal domain of RNA polymerase II. Plays a role in RNA processing and termination. The protein is RNA polymerase II subunit A C-terminal domain phosphatase SSU72 like protein 5 of Homo sapiens (Human).